An 878-amino-acid polypeptide reads, in one-letter code: von Willebrand factor A domain-containing protein DDB_G0267758 (878 aa).

Positions 36–169 (GLFLTENNKK…TVKITLTITS (134 aa)) constitute a VIT domain. The VWFA domain occupies 316 to 496 (EFIFLIDCSG…ISLKPMFSNI (181 aa)). Positions 595–623 (SSSSSSSSSSSSSSSSSSSSSSSSSSSSS) are enriched in low complexity. 2 disordered regions span residues 595–638 (SSSS…HRLS) and 752–774 (SVKKSKKSETKEETTKTTSSKTK). Positions 624–635 (TTTATTNQNQIH) are enriched in polar residues.

This Dictyostelium discoideum (Social amoeba) protein is von Willebrand factor A domain-containing protein DDB_G0267758.